Consider the following 514-residue polypeptide: Zinc finger and BTB domain-containing protein 2 (514 aa).

The BTB domain maps to 24-89; sequence CDCTVAIGDV…MYTGKMAPQL (66 aa). Residues lysine 147 and lysine 154 each participate in a glycyl lysine isopeptide (Lys-Gly) (interchain with G-Cter in SUMO2) cross-link. Positions 149–231 are disordered; the sequence is ASAPEKLGRD…LEASSSDEQP (83 aa). 2 stretches are compositionally biased toward polar residues: residues 161 to 200 and 222 to 231; these read PQTS…PLQT and LEASSSDEQP. The C2H2-type 1 zinc finger occupies 254–276; sequence YACHLCGRRFTLRSSLREHLQIH. A Phosphoserine modification is found at serine 341. A Glycyl lysine isopeptide (Lys-Gly) (interchain with G-Cter in SUMO2) cross-link involves residue lysine 362. The C2H2-type 2 zinc-finger motif lies at 363 to 385; that stretch reads YECTICGRKFIQKSHWREHMYIH. The C2H2-type 3; atypical zinc-finger motif lies at 390–410; that stretch reads FKCSTCDKSFCRANQAARHVC. The C2H2-type 4; atypical zinc-finger motif lies at 448–468; sequence YKCNLCDKTFSTPNEVVKHSC. Glycyl lysine isopeptide (Lys-Gly) (interchain with G-Cter in SUMO2) cross-links involve residues lysine 465, lysine 505, and lysine 506.

The protein localises to the nucleus. May be involved in transcriptional regulation. The protein is Zinc finger and BTB domain-containing protein 2 (ZBTB2) of Homo sapiens (Human).